Here is a 461-residue protein sequence, read N- to C-terminus: Homocitrate synthase (461 aa).

A Pyruvate carboxyltransferase domain is found at 4 to 259 (VGILDSTLRE…IEVVKLDKLQ (256 aa)). Arg-12 lines the 2-oxoglutarate pocket. Residue Glu-13 participates in Mg(2+) binding. 2-oxoglutarate contacts are provided by His-76, Arg-136, and Thr-170. Residues His-198 and His-200 each coordinate Mg(2+). Residue His-292 is the Proton acceptor of the active site.

The protein belongs to the alpha-IPM synthase/homocitrate synthase family. Homocitrate synthase LYS20/LYS21 subfamily. The cofactor is Mg(2+). Requires Mn(2+) as cofactor.

The enzyme catalyses acetyl-CoA + 2-oxoglutarate + H2O = (2R)-homocitrate + CoA + H(+). It functions in the pathway amino-acid biosynthesis; L-lysine biosynthesis via AAA pathway; L-alpha-aminoadipate from 2-oxoglutarate: step 1/5. Catalyzes the aldol-type condensation of 2-oxoglutarate with acetyl-CoA to yield homocitrate. Carries out the first step of the alpha-aminoadipate (AAA) lysine biosynthesis pathway. The sequence is that of Homocitrate synthase from Saccharolobus islandicus (strain Y.N.15.51 / Yellowstone #2) (Sulfolobus islandicus).